Consider the following 490-residue polypeptide: Betaine aldehyde dehydrogenase (490 aa).

K(+) is bound by residues Ser26, Ile27, and Asp93. Residue 150-152 (GAW) participates in NAD(+) binding. Catalysis depends on Lys162, which acts as the Charge relay system. An NAD(+)-binding site is contributed by 176–179 (KPSE). Val180 is a binding site for K(+). 230–233 (GTDT) is a binding site for NAD(+). Residue Leu246 participates in K(+) binding. The Proton acceptor role is filled by Glu252. Gly254, Cys286, and Glu387 together coordinate NAD(+). Cys286 acts as the Nucleophile in catalysis. At Cys286 the chain carries Cysteine sulfenic acid (-SOH). Residues Lys457 and Gly460 each coordinate K(+). Glu464 (charge relay system) is an active-site residue.

The protein belongs to the aldehyde dehydrogenase family. In terms of assembly, dimer of dimers. K(+) serves as cofactor.

It catalyses the reaction betaine aldehyde + NAD(+) + H2O = glycine betaine + NADH + 2 H(+). It participates in amine and polyamine biosynthesis; betaine biosynthesis via choline pathway; betaine from betaine aldehyde: step 1/1. Functionally, involved in the biosynthesis of the osmoprotectant glycine betaine. Catalyzes the irreversible oxidation of betaine aldehyde to the corresponding acid. In Pseudomonas syringae pv. tomato (strain ATCC BAA-871 / DC3000), this protein is Betaine aldehyde dehydrogenase.